A 347-amino-acid chain; its full sequence is MNPLTLSLVLTTMMAGTLIVMTSSHWFMIWVGFEMNMLAIIPLLTKEHNPRSTEAATKYFLTQATASMLLMMAAITNLLYTGHWSIMKLINPTASIMMTMALTMKLGLSPFHFWVPEVTQGIPLMSGLILLTWQKLAPLSGLYMIMPLINTDILLIMSLMSIAIGGWGGLNQTQLRKIMAYSSIAHMGWMMAVLAYNPTMTLLNLYIYIPMTITTFMLLMINSTTTTTSLSQTWNKLPLITTLILITMLSLGGLPPLTGFLPKWAIIQEMTKNSSIIMPTLMTLLALLNLYFYTRITYTTSLTMFPTANNMKIKWQFKNPKQMMSLPLMIMISTLVPPLAPMMPILT.

Helical transmembrane passes span 1–21, 25–45, 67–87, 111–131, 144–164, 178–198, 201–221, 237–257, 274–294, and 326–346; these read MNPLTLSLVLTTMMAGTLIVM, HWFMIWVGFEMNMLAIIPLLT, SMLLMMAAITNLLYTGHWSIM, FHFWVPEVTQGIPLMSGLILL, MIMPLINTDILLIMSLMSIAI, IMAYSSIAHMGWMMAVLAYNP, TLLNLYIYIPMTITTFMLLMI, LPLITTLILITMLSLGGLPPL, SSIIMPTLMTLLALLNLYFYT, and LPLMIMISTLVPPLAPMMPIL.

It belongs to the complex I subunit 2 family. In terms of assembly, core subunit of respiratory chain NADH dehydrogenase (Complex I) which is composed of 45 different subunits. Interacts with TMEM242.

It is found in the mitochondrion inner membrane. It catalyses the reaction a ubiquinone + NADH + 5 H(+)(in) = a ubiquinol + NAD(+) + 4 H(+)(out). Its function is as follows. Core subunit of the mitochondrial membrane respiratory chain NADH dehydrogenase (Complex I) which catalyzes electron transfer from NADH through the respiratory chain, using ubiquinone as an electron acceptor. Essential for the catalytic activity and assembly of complex I. The sequence is that of NADH-ubiquinone oxidoreductase chain 2 from Myotis simus (Velvety myotis).